We begin with the raw amino-acid sequence, 79 residues long: Large ribosomal subunit protein bL31 (79 aa).

It belongs to the bacterial ribosomal protein bL31 family. Type A subfamily. Part of the 50S ribosomal subunit.

Functionally, binds the 23S rRNA. The polypeptide is Large ribosomal subunit protein bL31 (rpmE) (Rickettsia bellii (strain RML369-C)).